The chain runs to 853 residues: NADH-quinone oxidoreductase subunit G 2 (853 aa).

A 2Fe-2S ferredoxin-type domain is found at 1-78 (MIKVTIDEQS…GMVVRTNTPL (78 aa)). [2Fe-2S] cluster-binding residues include Cys34, Cys45, Cys48, and Cys62. Residues 78-117 (LIEETRSSMLDMLLANHPLDCPICDKGGECELQDMVMAYG) enclose the 4Fe-4S His(Cys)3-ligated-type domain. [4Fe-4S] cluster-binding residues include His94, Cys98, Cys101, Cys107, Cys148, Cys151, Cys154, Cys198, Cys224, Cys227, Cys231, and Cys259. 2 4Fe-4S ferredoxin-type domains span residues 139-170 (PVII…LGTV) and 179-209 (TGFE…FPYR). Residues 217 to 273 (LAETDTICPHCGTGCQLTVGARKGEFMRVRSDWEHGVNRETLCVRGRFGLDFIESRD) enclose the 4Fe-4S Mo/W bis-MGD-type domain.

Belongs to the complex I 75 kDa subunit family. The cofactor is [2Fe-2S] cluster. Requires [4Fe-4S] cluster as cofactor.

The enzyme catalyses a quinone + NADH + 5 H(+)(in) = a quinol + NAD(+) + 4 H(+)(out). NDH-1 shuttles electrons from NADH, via FMN and iron-sulfur (Fe-S) centers, to quinones in the respiratory chain. The immediate electron acceptor for the enzyme in this species is believed to be ubiquinone. Couples the redox reaction to proton translocation (for every two electrons transferred, four hydrogen ions are translocated across the cytoplasmic membrane), and thus conserves the redox energy in a proton gradient. This chain is NADH-quinone oxidoreductase subunit G 2 (nuoG2), found in Rhizobium meliloti (strain 1021) (Ensifer meliloti).